A 280-amino-acid chain; its full sequence is 2,3,4,5-tetrahydropyridine-2,6-dicarboxylate N-succinyltransferase (280 aa).

2 residues coordinate substrate: Arg109 and Asp146.

It belongs to the transferase hexapeptide repeat family. As to quaternary structure, homotrimer.

It is found in the cytoplasm. It carries out the reaction (S)-2,3,4,5-tetrahydrodipicolinate + succinyl-CoA + H2O = (S)-2-succinylamino-6-oxoheptanedioate + CoA. The protein operates within amino-acid biosynthesis; L-lysine biosynthesis via DAP pathway; LL-2,6-diaminopimelate from (S)-tetrahydrodipicolinate (succinylase route): step 1/3. This chain is 2,3,4,5-tetrahydropyridine-2,6-dicarboxylate N-succinyltransferase, found in Blochmanniella floridana.